We begin with the raw amino-acid sequence, 351 residues long: Flagellin (351 aa).

It belongs to the bacterial flagellin family.

Its subcellular location is the secreted. It localises to the bacterial flagellum. Its function is as follows. Flagellin is the subunit protein which polymerizes to form the filaments of bacterial flagella. This is Flagellin (fliC) from Serratia marcescens.